The primary structure comprises 301 residues: Protein ARMCX6 (301 aa).

Residues 1-6 (MGRARE) form a mitochondrion outer membrane (MOM)-targeting sequence region. At 1 to 7 (MGRAREM) the chain is on the mitochondrial intermembrane side. A helical; Signal-anchor membrane pass occupies residues 8-25 (GWMAAGLMIGAGACYCMY). The interval 26-36 (KLTMGRSEGNE) is mitochondrion outer membrane (MOM)-targeting sequence. The Cytoplasmic segment spans residues 26–301 (KLTMGRSEGN…REMLVEAISP (276 aa)). The segment at 69–101 (WSEDGDWDEPGAPGGTEDRRSGGGKANRAHPIK) is disordered.

It belongs to the eutherian X-chromosome-specific Armcx family. In terms of tissue distribution, highly expressed in the developing neural tissues, neural crest derivatives and hind limbs. Also widely expressed in the adult nervous tissue, especially in the forebrain, including the cerebral cortex, hippocampus and thalamus.

It localises to the mitochondrion. Its subcellular location is the mitochondrion outer membrane. Functionally, may regulate the dynamics and distribution of mitochondria in neural cells. In Mus musculus (Mouse), this protein is Protein ARMCX6 (Armcx6).